The following is a 134-amino-acid chain: Small ribosomal subunit protein uS11 (134 aa).

The tract at residues 114-134 is disordered; sequence TPVPHNGTRPPRKWFKRQEKR. Residues 123–134 are compositionally biased toward basic residues; it reads PPRKWFKRQEKR.

This sequence belongs to the universal ribosomal protein uS11 family. In terms of assembly, part of the 30S ribosomal subunit. Interacts with proteins S7 and S18. Binds to IF-3.

Functionally, located on the platform of the 30S subunit, it bridges several disparate RNA helices of the 16S rRNA. Forms part of the Shine-Dalgarno cleft in the 70S ribosome. This is Small ribosomal subunit protein uS11 from Mesomycoplasma hyopneumoniae (strain J / ATCC 25934 / NCTC 10110) (Mycoplasma hyopneumoniae).